The following is a 137-amino-acid chain: Global transcriptional regulator Spx (137 aa).

An intrachain disulfide couples C10 to C13.

This sequence belongs to the ArsC family. Spx subfamily. In terms of assembly, interacts with the C-terminal domain of the alpha subunit of the RNAP.

It is found in the cytoplasm. Its function is as follows. Global transcriptional regulator that plays a key role in stress response and exerts either positive or negative regulation of genes. Acts by interacting with the C-terminal domain of the alpha subunit of the RNA polymerase (RNAP). This interaction can enhance binding of RNAP to the promoter region of target genes and stimulate their transcription, or block interaction of RNAP with activator. This chain is Global transcriptional regulator Spx, found in Streptococcus mutans serotype c (strain ATCC 700610 / UA159).